Consider the following 93-residue polypeptide: Small ribosomal subunit protein uS19 (93 aa).

This sequence belongs to the universal ribosomal protein uS19 family.

Protein S19 forms a complex with S13 that binds strongly to the 16S ribosomal RNA. In Nitratidesulfovibrio vulgaris (strain DSM 19637 / Miyazaki F) (Desulfovibrio vulgaris), this protein is Small ribosomal subunit protein uS19.